We begin with the raw amino-acid sequence, 384 residues long: MSKALDIARDLLACPSVTPADAGALGVLEKLLKDAGFETYRLTFSEPGADDTDNLYARIGAGHPHITFAGHTDVVPPGDNAAWSHDAFAATVDGGVLYGRGAVDMKGAIACAAAAVLDYLEANGGKPKGSISFLITGDEEGPAVNGTVKLLDWAAKRGEKFDHCLLGEPSNVNALGDCIKAGRRGSLSGTLIVEGKQGHAAYPDRAHNPLPEIASLVAALDADPLDQGSDHFPPSNLEFLSIDTGNPAWNVIPAQARARFNIRHNDCRTQDALRALIEARVEKLTGNRITARIEWEPSNADAFLTQPGAFTDLVIDAIEEVTGRKPKLDTGGGTSDARFITHYCPVLEFGLVGQTMHQIDERTPVADLDALTQIYRGVLTRYFK.

H71 contributes to the Zn(2+) binding site. The active site involves D73. Residue D104 participates in Zn(2+) binding. The active-site Proton acceptor is E139. Zn(2+) is bound by residues E140, E168, and H357.

The protein belongs to the peptidase M20A family. DapE subfamily. As to quaternary structure, homodimer. Zn(2+) is required as a cofactor. It depends on Co(2+) as a cofactor.

The catalysed reaction is N-succinyl-(2S,6S)-2,6-diaminopimelate + H2O = (2S,6S)-2,6-diaminopimelate + succinate. Its pathway is amino-acid biosynthesis; L-lysine biosynthesis via DAP pathway; LL-2,6-diaminopimelate from (S)-tetrahydrodipicolinate (succinylase route): step 3/3. Functionally, catalyzes the hydrolysis of N-succinyl-L,L-diaminopimelic acid (SDAP), forming succinate and LL-2,6-diaminopimelate (DAP), an intermediate involved in the bacterial biosynthesis of lysine and meso-diaminopimelic acid, an essential component of bacterial cell walls. The protein is Succinyl-diaminopimelate desuccinylase of Afipia carboxidovorans (strain ATCC 49405 / DSM 1227 / KCTC 32145 / OM5) (Oligotropha carboxidovorans).